The following is a 467-amino-acid chain: Uronate isomerase (467 aa).

It belongs to the metallo-dependent hydrolases superfamily. Uronate isomerase family.

It catalyses the reaction D-glucuronate = D-fructuronate. It carries out the reaction aldehydo-D-galacturonate = keto-D-tagaturonate. The protein operates within carbohydrate metabolism; pentose and glucuronate interconversion. The polypeptide is Uronate isomerase (Mannheimia succiniciproducens (strain KCTC 0769BP / MBEL55E)).